The following is a 633-amino-acid chain: Extracellular metalloproteinase 3 (633 aa).

The N-terminal stretch at 1-18 (MHGLLLAGLLALPMNVLA) is a signal peptide. The propeptide occupies 19-246 (YPAEQHASNV…VHNVVDYVAS (228 aa)). Asn410 is a glycosylation site (N-linked (GlcNAc...) asparagine). A Zn(2+)-binding site is contributed by His429. Residue Glu430 is part of the active site. Residue His433 coordinates Zn(2+). N-linked (GlcNAc...) asparagine glycosylation is found at Asn480 and Asn622.

Belongs to the peptidase M36 family. It depends on Zn(2+) as a cofactor.

The protein resides in the secreted. In terms of biological role, secreted metalloproteinase probably acting as a virulence factor. In Trichophyton rubrum (Athlete's foot fungus), this protein is Extracellular metalloproteinase 3 (MEP3).